A 239-amino-acid polypeptide reads, in one-letter code: 1-(5-phosphoribosyl)-5-[(5-phosphoribosylamino)methylideneamino] imidazole-4-carboxamide isomerase (239 aa).

Asp-8 functions as the Proton acceptor in the catalytic mechanism. Asp-129 serves as the catalytic Proton donor.

It belongs to the HisA/HisF family.

The protein localises to the cytoplasm. It carries out the reaction 1-(5-phospho-beta-D-ribosyl)-5-[(5-phospho-beta-D-ribosylamino)methylideneamino]imidazole-4-carboxamide = 5-[(5-phospho-1-deoxy-D-ribulos-1-ylimino)methylamino]-1-(5-phospho-beta-D-ribosyl)imidazole-4-carboxamide. It participates in amino-acid biosynthesis; L-histidine biosynthesis; L-histidine from 5-phospho-alpha-D-ribose 1-diphosphate: step 4/9. In Bacillus mycoides (strain KBAB4) (Bacillus weihenstephanensis), this protein is 1-(5-phosphoribosyl)-5-[(5-phosphoribosylamino)methylideneamino] imidazole-4-carboxamide isomerase.